A 257-amino-acid chain; its full sequence is Imidazole glycerol phosphate synthase subunit HisF (257 aa).

Residues D11 and D130 contribute to the active site.

The protein belongs to the HisA/HisF family. As to quaternary structure, heterodimer of HisH and HisF.

Its subcellular location is the cytoplasm. The enzyme catalyses 5-[(5-phospho-1-deoxy-D-ribulos-1-ylimino)methylamino]-1-(5-phospho-beta-D-ribosyl)imidazole-4-carboxamide + L-glutamine = D-erythro-1-(imidazol-4-yl)glycerol 3-phosphate + 5-amino-1-(5-phospho-beta-D-ribosyl)imidazole-4-carboxamide + L-glutamate + H(+). The protein operates within amino-acid biosynthesis; L-histidine biosynthesis; L-histidine from 5-phospho-alpha-D-ribose 1-diphosphate: step 5/9. Functionally, IGPS catalyzes the conversion of PRFAR and glutamine to IGP, AICAR and glutamate. The HisF subunit catalyzes the cyclization activity that produces IGP and AICAR from PRFAR using the ammonia provided by the HisH subunit. The sequence is that of Imidazole glycerol phosphate synthase subunit HisF from Shewanella sp. (strain ANA-3).